Reading from the N-terminus, the 248-residue chain is MIKIGIYGAKGRMGKQIEECLKSETQAEISILYNKGGNLEELFEKSDVIIDFSSPSGTHELLNYARTMPKPLTIGTTGLDEKILHLMQSASKVMPIFYATNMSLGVAVLNYLASKASQMLRNFDIEILEMHHRHKKDAPSGTAMTLAQSVAKARNLELEKVRVSGRDGIIGERSKDEIAVMSLRGGDIVGRHTVGFYEDGEFLELNHTATSRATFAKGAIKIAIWLSKQEAKMYSINDFFRNLKCVQL.

NAD(+) is bound by residues 8-13 (GAKGRM), 75-77 (GTT), and 99-102 (ATNM). The active-site Proton donor/acceptor is the His131. His132 lines the (S)-2,3,4,5-tetrahydrodipicolinate pocket. Lys135 acts as the Proton donor in catalysis. 141–142 (GT) is a binding site for (S)-2,3,4,5-tetrahydrodipicolinate.

Belongs to the DapB family.

It localises to the cytoplasm. It catalyses the reaction (S)-2,3,4,5-tetrahydrodipicolinate + NAD(+) + H2O = (2S,4S)-4-hydroxy-2,3,4,5-tetrahydrodipicolinate + NADH + H(+). The enzyme catalyses (S)-2,3,4,5-tetrahydrodipicolinate + NADP(+) + H2O = (2S,4S)-4-hydroxy-2,3,4,5-tetrahydrodipicolinate + NADPH + H(+). It participates in amino-acid biosynthesis; L-lysine biosynthesis via DAP pathway; (S)-tetrahydrodipicolinate from L-aspartate: step 4/4. In terms of biological role, catalyzes the conversion of 4-hydroxy-tetrahydrodipicolinate (HTPA) to tetrahydrodipicolinate. The chain is 4-hydroxy-tetrahydrodipicolinate reductase from Campylobacter jejuni subsp. doylei (strain ATCC BAA-1458 / RM4099 / 269.97).